The primary structure comprises 92 residues: Small ribosomal subunit protein uS19 (92 aa).

Belongs to the universal ribosomal protein uS19 family.

In terms of biological role, protein S19 forms a complex with S13 that binds strongly to the 16S ribosomal RNA. The polypeptide is Small ribosomal subunit protein uS19 (Geobacillus kaustophilus (strain HTA426)).